Consider the following 127-residue polypeptide: Aspartate 1-decarboxylase (127 aa).

The Schiff-base intermediate with substrate; via pyruvic acid role is filled by Ser-25. Ser-25 is subject to Pyruvic acid (Ser). A substrate-binding site is contributed by Thr-57. Residue Tyr-58 is the Proton donor of the active site. 73–75 (GAA) is a substrate binding site.

This sequence belongs to the PanD family. In terms of assembly, heterooctamer of four alpha and four beta subunits. Pyruvate is required as a cofactor. Is synthesized initially as an inactive proenzyme, which is activated by self-cleavage at a specific serine bond to produce a beta-subunit with a hydroxyl group at its C-terminus and an alpha-subunit with a pyruvoyl group at its N-terminus.

It localises to the cytoplasm. The catalysed reaction is L-aspartate + H(+) = beta-alanine + CO2. It functions in the pathway cofactor biosynthesis; (R)-pantothenate biosynthesis; beta-alanine from L-aspartate: step 1/1. Its function is as follows. Catalyzes the pyruvoyl-dependent decarboxylation of aspartate to produce beta-alanine. The sequence is that of Aspartate 1-decarboxylase from Bacillus pumilus (strain SAFR-032).